A 148-amino-acid chain; its full sequence is Transcription antitermination protein NusB (148 aa).

This sequence belongs to the NusB family.

Functionally, involved in transcription antitermination. Required for transcription of ribosomal RNA (rRNA) genes. Binds specifically to the boxA antiterminator sequence of the ribosomal RNA (rrn) operons. The chain is Transcription antitermination protein NusB from Novosphingobium aromaticivorans (strain ATCC 700278 / DSM 12444 / CCUG 56034 / CIP 105152 / NBRC 16084 / F199).